The following is a 154-amino-acid chain: Anaerobic ribonucleoside-triphosphate reductase-activating protein (154 aa).

3 residues coordinate [4Fe-4S] cluster: Cys26, Cys30, and Cys33. S-adenosyl-L-methionine contacts are provided by residues 32-34 (GCY) and Gly74.

It belongs to the organic radical-activating enzymes family. Forms a tetramer composed of two NrdD and two NrdG subunits. [4Fe-4S] cluster is required as a cofactor.

The protein resides in the cytoplasm. It carries out the reaction glycyl-[protein] + reduced [flavodoxin] + S-adenosyl-L-methionine = glycin-2-yl radical-[protein] + semiquinone [flavodoxin] + 5'-deoxyadenosine + L-methionine + H(+). In terms of biological role, activation of anaerobic ribonucleoside-triphosphate reductase under anaerobic conditions by generation of an organic free radical, using S-adenosylmethionine and reduced flavodoxin as cosubstrates to produce 5'-deoxy-adenosine. The chain is Anaerobic ribonucleoside-triphosphate reductase-activating protein (nrdG) from Salmonella typhimurium (strain LT2 / SGSC1412 / ATCC 700720).